The chain runs to 219 residues: uncharacterized protein (219 aa).

The residue at position 23 (S23) is a Phosphoserine. A Glycyl lysine isopeptide (Lys-Gly) (interchain with G-Cter in SUMO) cross-link involves residue K137.

It is found in the cytoplasm. This is an uncharacterized protein from Saccharomyces cerevisiae (strain ATCC 204508 / S288c) (Baker's yeast).